A 265-amino-acid polypeptide reads, in one-letter code: Type II pantothenate kinase (265 aa).

6–13 (DAGGTLIK) is an ATP binding site. The active-site Proton acceptor is E70. ATP is bound by residues T99, 121–125 (GGMIQ), Y137, and S225.

This sequence belongs to the type II pantothenate kinase family. As to quaternary structure, homodimer.

It is found in the cytoplasm. The enzyme catalyses (R)-pantothenate + ATP = (R)-4'-phosphopantothenate + ADP + H(+). The protein operates within cofactor biosynthesis; coenzyme A biosynthesis; CoA from (R)-pantothenate: step 1/5. Functionally, catalyzes the phosphorylation of pantothenate (Pan), the first step in CoA biosynthesis. The sequence is that of Type II pantothenate kinase from Staphylococcus saprophyticus subsp. saprophyticus (strain ATCC 15305 / DSM 20229 / NCIMB 8711 / NCTC 7292 / S-41).